The sequence spans 112 residues: MTRVKRGYVARRRRKNILKLTSGFQGAHSTLFRTANQQGMKSLTSSHRDRGKRKRDFRRLWITRINAAARRSKKSYHTLIQELYKRKILLNRKMLAQIAILDTYCFSTLLGD.

The protein belongs to the bacterial ribosomal protein bL20 family.

Its subcellular location is the plastid. The protein localises to the chloroplast. Binds directly to 23S ribosomal RNA and is necessary for the in vitro assembly process of the 50S ribosomal subunit. It is not involved in the protein synthesizing functions of that subunit. The sequence is that of Large ribosomal subunit protein bL20c (rpl20) from Anthoceros angustus (Hornwort).